A 438-amino-acid polypeptide reads, in one-letter code: Xylose isomerase (438 aa).

Residues H100 and D103 contribute to the active site. Residues E231, E267, H270, D295, D306, D308, and D338 each contribute to the Mg(2+) site.

The protein belongs to the xylose isomerase family. In terms of assembly, homotetramer. Mg(2+) serves as cofactor.

The protein resides in the cytoplasm. The enzyme catalyses alpha-D-xylose = alpha-D-xylulofuranose. In Thermoanaerobacter sp. (strain X514), this protein is Xylose isomerase.